The sequence spans 312 residues: Signal peptidase I (312 aa).

The chain crosses the membrane as a helical span at residues 7 to 27; that stretch reads IFLLTSTFFTGILWIIDHILL. Residues 28 to 63 lie on the Cytoplasmic side of the membrane; it reads IKNYFYNKKKTKNNNTILINKVILENKKCFFRSLSS. The chain crosses the membrane as a helical span at residues 64-84; sequence LFPTFFIVFIIRSFIYEPFQI. Residues 85–312 are Extracellular-facing; that stretch reads PSGSMMPTLL…IRIKRIGNIY (228 aa). Residues Ser-88 and Lys-142 contribute to the active site.

This sequence belongs to the peptidase S26 family.

The protein localises to the cell membrane. The enzyme catalyses Cleavage of hydrophobic, N-terminal signal or leader sequences from secreted and periplasmic proteins.. This Buchnera aphidicola subsp. Schizaphis graminum (strain Sg) protein is Signal peptidase I (lepB).